Consider the following 198-residue polypeptide: MELPDPVRQRLSNLSLTMFGDSSRTGPESSEAADNEMVSSLPLQMSLYFNSYFFPLWWVSCIVMLHLKYSVLPDYYKFIVITVVILITLIEAIRLYLGCMGNLQEKVPELAGFWLLSLLLQLPLLLFLLLNEGLKNLPLEKAIHSIFTVFLTFQVISAFLTLKKMVNQLAARFHLQDFDQLSASSATGRRARQSSEEL.

N13 carries N-linked (GlcNAc...) asparagine glycosylation. 4 consecutive transmembrane segments (helical) span residues 47-67 (LYFNSYFFPLWWVSCIVMLHL), 78-98 (FIVITVVILITLIEAIRLYLG), 110-130 (LAGFWLLSLLLQLPLLLFLLL), and 142-162 (AIHSIFTVFLTFQVISAFLTL).

It belongs to the TMEM17 family. Part of the tectonic-like complex (also named B9 complex).

Its subcellular location is the cell projection. It is found in the cilium membrane. Transmembrane component of the tectonic-like complex, a complex localized at the transition zone of primary cilia and acting as a barrier that prevents diffusion of transmembrane proteins between the cilia and plasma membranes. Required for ciliogenesis and sonic hedgehog/SHH signaling. In Rattus norvegicus (Rat), this protein is Transmembrane protein 17 (Tmem17).